The sequence spans 383 residues: Glycoprotein gp2 (383 aa).

The N-terminal stretch at 1–25 (MGFIYARKLLLCMAVSIYAIGSTTT) is a signal peptide. The span at 24-75 (TTTETTTSSSSTSGSGQSTSSGTTNSSSSPTTSPPTTSSSPPTSTHTSSPST) shows a compositional bias: low complexity. A disordered region spans residues 24 to 136 (TTTETTTSSS…RNNSIEIVPQ (113 aa)). N-linked (GlcNAc...) asparagine; by host glycosylation occurs at Asn48. Basic residues predominate over residues 81 to 91 (HAGHHRGRAGG). A glycan (N-linked (GlcNAc...) asparagine; by host) is linked at Asn128. The helical transmembrane segment at 354–371 (LVAATTLTVTILCLLCCL) threads the bilayer.

The protein resides in the virion membrane. The glycoprotein gp2 from the avirulent strain Kentucky A (KyA) is probably non functional since this strain harbors an in-frame deletion of 1,242 nucleotides in gene 71. The chain is Glycoprotein gp2 (US4) from Equus caballus (Horse).